The following is a 188-amino-acid chain: Thymidine kinase (188 aa).

17–24 lines the ATP pocket; the sequence is GPMFAGKT. E92 acts as the Proton acceptor in catalysis. A substrate-binding site is contributed by F121. Residues C146 and C149 each contribute to the Zn(2+) site. 166 to 170 lines the substrate pocket; sequence LILAG. Zn(2+) is bound by residues C179 and C182.

Belongs to the thymidine kinase family.

It carries out the reaction thymidine + ATP = dTMP + ADP + H(+). In terms of biological role, phosphorylates thymidine. ASFV replicates in the cytoplasm of infected cells and contains genes encoding a number of enzymes needed for DNA synthesis, including thymidine kinase. Important for growth in swine macrophages in vitro and is a virus virulence factor in swine. The chain is Thymidine kinase from African swine fever virus (isolate Tick/South Africa/Pretoriuskop Pr4/1996) (ASFV).